A 343-amino-acid chain; its full sequence is Photosystem II protein D1 (343 aa).

The next 3 membrane-spanning stretches (helical) occupy residues 28–45, 117–132, and 141–155; these read YIGW…VSTV, HFLA…EYEY, and WIYL…AASA. His117 provides a ligand contact to chlorophyll a. Trp125 is a pheophytin a binding site. Positions 169 and 188 each coordinate [CaMn4O5] cluster. A helical transmembrane segment spans residues 196–217; the sequence is FHILGVSAVFGGSLFSAMHGSL. His197 contributes to the chlorophyll a binding site. Residues His214 and 263 to 264 contribute to the a quinone site; that span reads SF. His214 is a binding site for Fe cation. His271 lines the Fe cation pocket. Residues 273 to 287 traverse the membrane as a helical segment; it reads FLAAWPVIGIWCTAI. Positions 331, 332, 341, and 343 each coordinate [CaMn4O5] cluster.

This sequence belongs to the reaction center PufL/M/PsbA/D family. As to quaternary structure, PSII is composed of 1 copy each of membrane proteins PsbA, PsbB, PsbC, PsbD, PsbE, PsbF, PsbH, PsbI, PsbJ, PsbK, PsbL, PsbM, PsbT, PsbX, PsbY, PsbZ, Psb30/Ycf12, at least 3 peripheral proteins of the oxygen-evolving complex and a large number of cofactors. It forms dimeric complexes. The D1/D2 heterodimer binds P680, chlorophylls that are the primary electron donor of PSII, and subsequent electron acceptors. It shares a non-heme iron and each subunit binds pheophytin, quinone, additional chlorophylls, carotenoids and lipids. D1 provides most of the ligands for the Mn4-Ca-O5 cluster of the oxygen-evolving complex (OEC). There is also a Cl(-1) ion associated with D1 and D2, which is required for oxygen evolution. The PSII complex binds additional chlorophylls, carotenoids and specific lipids. is required as a cofactor. In terms of processing, tyr-160 forms a radical intermediate that is referred to as redox-active TyrZ, YZ or Y-Z.

It localises to the plastid. The protein resides in the chloroplast thylakoid membrane. The catalysed reaction is 2 a plastoquinone + 4 hnu + 2 H2O = 2 a plastoquinol + O2. Its function is as follows. Photosystem II (PSII) is a light-driven water:plastoquinone oxidoreductase that uses light energy to abstract electrons from H(2)O, generating O(2) and a proton gradient subsequently used for ATP formation. It consists of a core antenna complex that captures photons, and an electron transfer chain that converts photonic excitation into a charge separation. The D1/D2 (PsbA/PsbD) reaction center heterodimer binds P680, the primary electron donor of PSII as well as several subsequent electron acceptors. The protein is Photosystem II protein D1 of Prorocentrum micans (Red tide dinoflagellate).